A 166-amino-acid chain; its full sequence is MTKKKNKKVTKSERGEANRRLAENRLARHQYEILETLETGIELVGTEVKSIRAGNTNLRDGFCLIREGELQLHNVHISPLNNAGNFFNHDPLRTRKLLAHRKEINKLEIQVARKGLTLIPLSIHLKGSWIKIIIGVGKGRKLHDKREDDKRKQANRDMKSALARYR.

Residues 143–166 (HDKREDDKRKQANRDMKSALARYR) are disordered. A compositionally biased stretch (basic and acidic residues) spans 144-159 (DKREDDKRKQANRDMK).

Belongs to the SmpB family.

It is found in the cytoplasm. Functionally, required for rescue of stalled ribosomes mediated by trans-translation. Binds to transfer-messenger RNA (tmRNA), required for stable association of tmRNA with ribosomes. tmRNA and SmpB together mimic tRNA shape, replacing the anticodon stem-loop with SmpB. tmRNA is encoded by the ssrA gene; the 2 termini fold to resemble tRNA(Ala) and it encodes a 'tag peptide', a short internal open reading frame. During trans-translation Ala-aminoacylated tmRNA acts like a tRNA, entering the A-site of stalled ribosomes, displacing the stalled mRNA. The ribosome then switches to translate the ORF on the tmRNA; the nascent peptide is terminated with the 'tag peptide' encoded by the tmRNA and targeted for degradation. The ribosome is freed to recommence translation, which seems to be the essential function of trans-translation. This chain is SsrA-binding protein, found in Prochlorococcus marinus (strain MIT 9211).